We begin with the raw amino-acid sequence, 211 residues long: Succinate dehydrogenase subunit 4, mitochondrial (211 aa).

The transit peptide at 1 to 36 (MASRLLARSKALALALSRADAAAPGPAAGVQWLRTL) directs the protein to the mitochondrion. The segment at 41–64 (RDPAAAASPAPAPRQPAVGSPLGL) is disordered. Residue H166 participates in heme binding. Y179 provides a ligand contact to a ubiquinone. The chain crosses the membrane as a helical span at residues 188–210 (WVFIYFKILLIIMAKETVVYFDL).

As to quaternary structure, component of complex II composed of eight subunits in plants: four classical SDH subunits SDH1, SDH2, SDH3 and SDH4 (a flavoprotein (FP), an iron-sulfur protein (IP), and a cytochrome b composed of a large and a small subunit.), as well as four subunits unknown in mitochondria from bacteria and heterotrophic eukaryotes. Heme is required as a cofactor.

It localises to the mitochondrion inner membrane. It functions in the pathway carbohydrate metabolism; tricarboxylic acid cycle. Its function is as follows. Membrane-anchoring subunit of succinate dehydrogenase (SDH). The protein is Succinate dehydrogenase subunit 4, mitochondrial of Oryza sativa subsp. japonica (Rice).